The chain runs to 138 residues: Odorant-binding protein 22 (138 aa).

The N-terminal stretch at 1–16 (MKVFIAVFALIAVAAA) is a signal peptide. Arg30 is a (5Z,8Z,11Z,14Z)-eicosatetraenoate binding site. (9Z)-hexadecenoate contacts are provided by Arg30 and Tyr61. Arg30 and Tyr61 together coordinate (9Z,12Z)-octadecadienoate. 3 disulfide bridges follow: Cys33–Cys64, Cys60–Cys113, and Cys103–Cys122. N-linked (GlcNAc...) asparagine glycosylation is present at Asn127.

Belongs to the PBP/GOBP family. In terms of assembly, monomer in solution. High-level expression in female mouth parts, particularly in the proboscis (at protein level). Moderate-level expression in female antenna (at protein level). Expressed in testis but not in the accessory gland or ejaculatory duct (at protein level). Expressed in spermathecae (at protein level). Female salivary gland. Female chemosensory organs: antenna, palp and proboscis. Not detected in midgut.

The protein resides in the secreted. Functionally, involved in modulation of blood-feeding behavior and capacity in female mosquitoes. Required for normal oviposition. Required for normal fecundity and fertility of female and male mosquitoes. Required for normal expression of VGA1 gene, which encodes the egg yolk protein vitellogenin-A1. Involved in regulation of spermatozoa development. Required for normal female longevity when mosquitoes are maintained on regular sugar meal. Binds long chain fatty acids. (Microbial infection) Facilitates shedding of dengue virus type 2 particles into mosquito saliva. Does not affect dengue virus type 2 replication or infection prevalence in midgut and salivary glands at 14 days after blood feeding. Its function is as follows. (Microbial infection) Facilitates shedding of Zika virus particles into mosquito saliva. Does not affect Zika virus replication or infection prevalence in midgut and salivary glands at 14 days after blood feeding. The chain is Odorant-binding protein 22 from Aedes aegypti (Yellowfever mosquito).